The chain runs to 171 residues: Minor capsid protein 3 (171 aa).

In terms of assembly, interacts with the major capsid protein.

The protein resides in the virion. One of the minor capsid proteins that constitute a network internal to the major capsid proteins and outside the lipid membrane. The minor capsid proteins glue and stabilize the capsomers. The polypeptide is Minor capsid protein 3 (Chlorella (PBCV-1)).